The chain runs to 572 residues: Proline--tRNA ligase (572 aa).

It belongs to the class-II aminoacyl-tRNA synthetase family. ProS type 1 subfamily. Homodimer.

It is found in the cytoplasm. It carries out the reaction tRNA(Pro) + L-proline + ATP = L-prolyl-tRNA(Pro) + AMP + diphosphate. Catalyzes the attachment of proline to tRNA(Pro) in a two-step reaction: proline is first activated by ATP to form Pro-AMP and then transferred to the acceptor end of tRNA(Pro). As ProRS can inadvertently accommodate and process non-cognate amino acids such as alanine and cysteine, to avoid such errors it has two additional distinct editing activities against alanine. One activity is designated as 'pretransfer' editing and involves the tRNA(Pro)-independent hydrolysis of activated Ala-AMP. The other activity is designated 'posttransfer' editing and involves deacylation of mischarged Ala-tRNA(Pro). The misacylated Cys-tRNA(Pro) is not edited by ProRS. The sequence is that of Proline--tRNA ligase from Escherichia coli O157:H7.